The sequence spans 288 residues: Eukaryotic translation initiation factor 3 subunit G (288 aa).

The interval 1–35 (MSRVANNRDWADDEDLEDSNELPQSTTTTNKDGTQ) is disordered. Acidic residues predominate over residues 11–20 (ADDEDLEDSN). Polar residues predominate over residues 21–35 (ELPQSTTTTNKDGTQ). In terms of domain architecture, RRM spans 208–286 (ATLRVTNVSE…LILRVEFAKK (79 aa)).

Belongs to the eIF-3 subunit G family. In terms of assembly, component of the eukaryotic translation initiation factor 3 (eIF-3) complex.

It localises to the cytoplasm. Functionally, RNA-binding component of the eukaryotic translation initiation factor 3 (eIF-3) complex, which is involved in protein synthesis of a specialized repertoire of mRNAs and, together with other initiation factors, stimulates binding of mRNA and methionyl-tRNAi to the 40S ribosome. The eIF-3 complex specifically targets and initiates translation of a subset of mRNAs involved in cell proliferation. This subunit can bind 18S rRNA. The chain is Eukaryotic translation initiation factor 3 subunit G (tif35) from Botryotinia fuckeliana (strain B05.10) (Noble rot fungus).